The following is a 296-amino-acid chain: Phosphatidylglycerol--prolipoprotein diacylglyceryl transferase (296 aa).

The next 4 helical transmembrane spans lie at 10–30 (IAFS…LAAF), 57–77 (LLFY…MLFY), 92–112 (VWEG…ACWL), and 119–139 (LHFF…LGFG). Residue Arg-140 participates in a 1,2-diacyl-sn-glycero-3-phospho-(1'-sn-glycerol) binding. Helical transmembrane passes span 194–214 (QLYE…TFSM), 220–240 (YAVS…VEFV), and 254–274 (WLTM…VLLA).

Belongs to the Lgt family.

Its subcellular location is the cell inner membrane. The enzyme catalyses L-cysteinyl-[prolipoprotein] + a 1,2-diacyl-sn-glycero-3-phospho-(1'-sn-glycerol) = an S-1,2-diacyl-sn-glyceryl-L-cysteinyl-[prolipoprotein] + sn-glycerol 1-phosphate + H(+). The protein operates within protein modification; lipoprotein biosynthesis (diacylglyceryl transfer). Catalyzes the transfer of the diacylglyceryl group from phosphatidylglycerol to the sulfhydryl group of the N-terminal cysteine of a prolipoprotein, the first step in the formation of mature lipoproteins. In Xanthomonas axonopodis pv. citri (strain 306), this protein is Phosphatidylglycerol--prolipoprotein diacylglyceryl transferase.